The chain runs to 90 residues: UPF0512 protein L (90 aa).

The protein belongs to the UPF0512 family.

The sequence is that of UPF0512 protein L from Dictyostelium discoideum (Social amoeba).